Here is a 712-residue protein sequence, read N- to C-terminus: Semaphorin-1A (712 aa).

Residues 1–20 (MVVKILVWSICLIALCHAWM) form the signal peptide. The 463-residue stretch at 21 to 483 (PDSSSKLINH…GKDEIRLANL (463 aa)) folds into the Sema domain. At 21 to 601 (PDSSSKLINH…IGGCAVRQQL (581 aa)) the chain is on the extracellular side. 2 N-linked (GlcNAc...) asparagine glycosylation sites follow: N42 and N69. 2 cysteine pairs are disulfide-bonded: C95/C105 and C123/C132. N-linked (GlcNAc...) asparagine glycans are attached at residues N161 and N265. 4 disulfides stabilise this stretch: C242–C357, C266–C316, C486–C503, and C495–C512. The helical transmembrane segment at 602–622 (VIYTAGTLHIVVVVVSIVGLF) threads the bilayer. At 623 to 712 (SWLYSGLSVF…TLQKIKKTYI (90 aa)) the chain is on the cytoplasmic side.

Belongs to the semaphorin family.

It localises to the membrane. Functionally, plays a role in growth cones guidance. This is Semaphorin-1A (SEMA-1A) from Tribolium confusum (Confused flour beetle).